A 299-amino-acid chain; its full sequence is ATP phosphoribosyltransferase (299 aa).

Belongs to the ATP phosphoribosyltransferase family. Long subfamily. In terms of assembly, equilibrium between an active dimeric form, an inactive hexameric form and higher aggregates. Interconversion between the various forms is largely reversible and is influenced by the natural substrates and inhibitors of the enzyme. It depends on Mg(2+) as a cofactor.

The protein resides in the cytoplasm. It carries out the reaction 1-(5-phospho-beta-D-ribosyl)-ATP + diphosphate = 5-phospho-alpha-D-ribose 1-diphosphate + ATP. Its pathway is amino-acid biosynthesis; L-histidine biosynthesis; L-histidine from 5-phospho-alpha-D-ribose 1-diphosphate: step 1/9. Feedback inhibited by histidine. Catalyzes the condensation of ATP and 5-phosphoribose 1-diphosphate to form N'-(5'-phosphoribosyl)-ATP (PR-ATP). Has a crucial role in the pathway because the rate of histidine biosynthesis seems to be controlled primarily by regulation of HisG enzymatic activity. The sequence is that of ATP phosphoribosyltransferase from Klebsiella pneumoniae (strain 342).